Here is a 480-residue protein sequence, read N- to C-terminus: Aspartyl/glutamyl-tRNA(Asn/Gln) amidotransferase subunit B (480 aa).

Belongs to the GatB/GatE family. GatB subfamily. Heterotrimer of A, B and C subunits.

It catalyses the reaction L-glutamyl-tRNA(Gln) + L-glutamine + ATP + H2O = L-glutaminyl-tRNA(Gln) + L-glutamate + ADP + phosphate + H(+). The catalysed reaction is L-aspartyl-tRNA(Asn) + L-glutamine + ATP + H2O = L-asparaginyl-tRNA(Asn) + L-glutamate + ADP + phosphate + 2 H(+). In terms of biological role, allows the formation of correctly charged Asn-tRNA(Asn) or Gln-tRNA(Gln) through the transamidation of misacylated Asp-tRNA(Asn) or Glu-tRNA(Gln) in organisms which lack either or both of asparaginyl-tRNA or glutaminyl-tRNA synthetases. The reaction takes place in the presence of glutamine and ATP through an activated phospho-Asp-tRNA(Asn) or phospho-Glu-tRNA(Gln). In Saccharophagus degradans (strain 2-40 / ATCC 43961 / DSM 17024), this protein is Aspartyl/glutamyl-tRNA(Asn/Gln) amidotransferase subunit B.